We begin with the raw amino-acid sequence, 424 residues long: Serine hydroxymethyltransferase (424 aa).

(6S)-5,6,7,8-tetrahydrofolate-binding positions include L113 and G117–L119. K222 carries the post-translational modification N6-(pyridoxal phosphate)lysine. S361–F363 lines the (6S)-5,6,7,8-tetrahydrofolate pocket.

Belongs to the SHMT family. In terms of assembly, homodimer. Pyridoxal 5'-phosphate is required as a cofactor.

It is found in the cytoplasm. The enzyme catalyses (6R)-5,10-methylene-5,6,7,8-tetrahydrofolate + glycine + H2O = (6S)-5,6,7,8-tetrahydrofolate + L-serine. Its pathway is one-carbon metabolism; tetrahydrofolate interconversion. It participates in amino-acid biosynthesis; glycine biosynthesis; glycine from L-serine: step 1/1. In terms of biological role, catalyzes the reversible interconversion of serine and glycine with tetrahydrofolate (THF) serving as the one-carbon carrier. This reaction serves as the major source of one-carbon groups required for the biosynthesis of purines, thymidylate, methionine, and other important biomolecules. Also exhibits THF-independent aldolase activity toward beta-hydroxyamino acids, producing glycine and aldehydes, via a retro-aldol mechanism. The protein is Serine hydroxymethyltransferase of Flavobacterium johnsoniae (strain ATCC 17061 / DSM 2064 / JCM 8514 / BCRC 14874 / CCUG 350202 / NBRC 14942 / NCIMB 11054 / UW101) (Cytophaga johnsonae).